The primary structure comprises 217 residues: Peptide methionine sulfoxide reductase MsrA (217 aa).

A disordered region spans residues 16 to 39; the sequence is EALKGGRHPVLESPQPHTVLGTPI. Cys-56 is a catalytic residue.

Belongs to the MsrA Met sulfoxide reductase family.

The catalysed reaction is L-methionyl-[protein] + [thioredoxin]-disulfide + H2O = L-methionyl-(S)-S-oxide-[protein] + [thioredoxin]-dithiol. It carries out the reaction [thioredoxin]-disulfide + L-methionine + H2O = L-methionine (S)-S-oxide + [thioredoxin]-dithiol. Its function is as follows. Has an important function as a repair enzyme for proteins that have been inactivated by oxidation. Catalyzes the reversible oxidation-reduction of methionine sulfoxide in proteins to methionine. This is Peptide methionine sulfoxide reductase MsrA from Corynebacterium efficiens (strain DSM 44549 / YS-314 / AJ 12310 / JCM 11189 / NBRC 100395).